Here is an 884-residue protein sequence, read N- to C-terminus: Receptor-like protein 39 (884 aa).

The N-terminal stretch at 1–24 is a signal peptide; that stretch reads MSELLFRLNFLLLLLLSCVSLASS. The Extracellular segment spans residues 25–847; it reads FFSFNDPVVG…EEEEQVLNWK (823 aa). N-linked (GlcNAc...) asparagine glycosylation is found at asparagine 59, asparagine 71, and asparagine 92. 10 LRR repeats span residues 98-122, 124-146, 147-170, 171-196, 197-223, 225-245, 246-268, 269-292, 294-318, and 320-344; these read FHQL…EFGM, NKLE…SFSN, LSML…VRNL, RKLT…LFEL, HNLA…NLNK, ELLD…ISNL, TQLT…VQNL, TKLS…LFTM, FLSY…SLSS, and LENL…LINL. An N-linked (GlcNAc...) asparagine glycan is attached at asparagine 146. Asparagine 190, asparagine 208, asparagine 244, and asparagine 267 each carry an N-linked (GlcNAc...) asparagine glycan. Residues asparagine 304 and asparagine 313 are each glycosylated (N-linked (GlcNAc...) asparagine). The stretch at 345–365 is one LRR 11; degenerate repeat; the sequence is KELHLSFLNTSYPINLKLFSS. N-linked (GlcNAc...) asparagine glycosylation occurs at asparagine 353. LRR repeat units lie at residues 366–391, 392–413, 414–438, 440–463, and 464–487; these read LKYL…SYIP, STLE…ILKT, LPNL…LWSL, RLSS…ILVN, and SSVR…PLSV. An N-linked (GlcNAc...) asparagine glycan is attached at asparagine 403. Residue asparagine 463 is glycosylated (N-linked (GlcNAc...) asparagine). Residues 488-507 form an LRR 17; degenerate repeat; the sequence is NYFSARNNRYGGDIPLSICS. LRR repeat units lie at residues 508-529, 530-553, 554-577, 579-601, 602-625, 628-652, 702-725, 726-749, 750-773, and 775-798; these read RRSL…PPCP, SNFL…YYAD, APLR…LLNC, ALQF…LKAL, PKLQ…NQGS, FPEL…FFEN, SSSA…IGLL, KALI…LANL, KKIE…IGTL, and FLAY…QITG. Asparagine 520 carries an N-linked (GlcNAc...) asparagine glycan. N-linked (GlcNAc...) asparagine glycosylation is present at asparagine 576. N-linked (GlcNAc...) asparagine glycosylation is present at asparagine 732. N-linked (GlcNAc...) asparagine glycosylation occurs at asparagine 780. A helical membrane pass occupies residues 848–868; it reads GVGIGYGVGVLLGLAIAQLIA. Residues 869–884 lie on the Cytoplasmic side of the membrane; sequence SYKPEWLVFLFQSRNH.

Belongs to the RLP family.

It is found in the cell membrane. The polypeptide is Receptor-like protein 39 (Arabidopsis thaliana (Mouse-ear cress)).